The following is a 706-amino-acid chain: Choline transporter-like protein 2 (706 aa).

At 1–33 (MGDERPHYYGKHGTPQKYDPTFKGPIYNRGCTD) the chain is on the cytoplasmic side. At Thr-14 the chain carries Phosphothreonine. Residues 34 to 54 (IICCVFLLLAIVGYVAVGIIA) form a helical membrane-spanning segment. The Extracellular portion of the chain corresponds to 55-232 (WTHGDPRKVI…RIFEDYTVSW (178 aa)). N-linked (GlcNAc...) asparagine glycosylation is found at Asn-187 and Asn-200. A helical membrane pass occupies residues 233 to 253 (YWIIIGLVIAMAMSLLFIILL). Over 254–256 (RFL) the chain is Cytoplasmic. The helical transmembrane segment at 257–277 (AGIMVWVMIIMVILVLGYGIF) threads the bilayer. Over 278–315 (HCYMEYSRLRGEAGSDVSLVDLGFQTDFRVYLHLRQTW) the chain is Extracellular. The chain crosses the membrane as a helical span at residues 316 to 336 (LAFMIILSILEVIIILLLIFL). Residues 337–364 (RKRILIAIALIKEASRAVGYVMCSLLYP) lie on the Cytoplasmic side of the membrane. Residues 365–385 (LVTFFLLCLCIAYWASTAVFL) traverse the membrane as a helical segment. Topologically, residues 386–457 (STSNEAVYKI…FNAFMFFWLA (72 aa)) are extracellular. Asn-417 carries N-linked (GlcNAc...) asparagine glycosylation. A helical transmembrane segment spans residues 458–480 (NFVLALGQVTLAGAFASYYWALR). Residues 481-504 (KPDDLPAFPLFSAFGRALRYHTGS) lie on the Cytoplasmic side of the membrane. A helical transmembrane segment spans residues 505–525 (LAFGALILAIVQIIRVILEYL). Topologically, residues 526–563 (DQRLKAAENKFAKCLMTCLKCCFWCLEKFIKFLNRNAY) are extracellular. A helical membrane pass occupies residues 564 to 584 (IMIAIYGTNFCTSARNAFFLL). Residues 585 to 599 (MRNIIRVAVLDKVTD) are Cytoplasmic-facing. The chain crosses the membrane as a helical span at residues 600 to 620 (FLFLLGKLLIVGSVGILAFFF). Topologically, residues 621 to 638 (FTHRIRIVQDTAPPLNYY) are extracellular. A helical membrane pass occupies residues 639–659 (WVPILTVIVGSYLIAHGFFSV). Residues 660 to 706 (YGMCVDTLFLCFLEDLERNDGSAERPYFMSSTLKKLLNKTNKKAAES) are Cytoplasmic-facing.

The protein belongs to the CTL (choline transporter-like) family. In terms of assembly, interacts with COCH. In terms of tissue distribution, present in supporting cells of the inner ear (at protein level). Expressed in inner ear vestibular tissue.

Its subcellular location is the cell membrane. It is found in the mitochondrion outer membrane. It carries out the reaction choline(out) + n H(+)(in) = choline(in) + n H(+)(out). It catalyses the reaction ethanolamine(out) + n H(+)(in) = ethanolamine(in) + n H(+)(out). Its function is as follows. Choline/H+ antiporter, mainly in mitochodria. Also acts as a low-affinity ethanolamine/H+ antiporter, regulating the supply of extracellular ethanolamine (Etn) for the CDP-Etn pathway, redistribute intracellular Etn and balance the CDP-Cho and CDP-Etn arms of the Kennedy pathway. Functionally, does not exhibit choline transporter activity. This chain is Choline transporter-like protein 2, found in Homo sapiens (Human).